A 487-amino-acid chain; its full sequence is Glutamyl-tRNA(Gln) amidotransferase subunit A (487 aa).

The active-site Charge relay system is Lys-78. The span at 135–144 shows a compositional bias: polar residues; that stretch reads SAYQTTTNPW. The segment at 135–155 is disordered; it reads SAYQTTTNPWDASRVPGGSSG. Ser-153 acts as the Charge relay system in catalysis. The Acyl-ester intermediate role is filled by Ser-177.

The protein belongs to the amidase family. GatA subfamily. As to quaternary structure, heterotrimer of A, B and C subunits.

It catalyses the reaction L-glutamyl-tRNA(Gln) + L-glutamine + ATP + H2O = L-glutaminyl-tRNA(Gln) + L-glutamate + ADP + phosphate + H(+). In terms of biological role, allows the formation of correctly charged Gln-tRNA(Gln) through the transamidation of misacylated Glu-tRNA(Gln) in organisms which lack glutaminyl-tRNA synthetase. The reaction takes place in the presence of glutamine and ATP through an activated gamma-phospho-Glu-tRNA(Gln). This is Glutamyl-tRNA(Gln) amidotransferase subunit A from Maridesulfovibrio salexigens (strain ATCC 14822 / DSM 2638 / NCIMB 8403 / VKM B-1763) (Desulfovibrio salexigens).